A 408-amino-acid chain; its full sequence is 8-amino-7-oxononanoate synthase (408 aa).

Arg20 is a binding site for substrate. 117 to 118 (GY) serves as a coordination point for pyridoxal 5'-phosphate. His142 contributes to the substrate binding site. Positions 188, 216, and 244 each coordinate pyridoxal 5'-phosphate. N6-(pyridoxal phosphate)lysine is present on Lys247. Thr367 serves as a coordination point for substrate.

The protein belongs to the class-II pyridoxal-phosphate-dependent aminotransferase family. BioF subfamily. As to quaternary structure, homodimer. It depends on pyridoxal 5'-phosphate as a cofactor.

It catalyses the reaction 6-carboxyhexanoyl-[ACP] + L-alanine + H(+) = (8S)-8-amino-7-oxononanoate + holo-[ACP] + CO2. It participates in cofactor biosynthesis; biotin biosynthesis. Catalyzes the decarboxylative condensation of pimeloyl-[acyl-carrier protein] and L-alanine to produce 8-amino-7-oxononanoate (AON), [acyl-carrier protein], and carbon dioxide. The protein is 8-amino-7-oxononanoate synthase of Cupriavidus pinatubonensis (strain JMP 134 / LMG 1197) (Cupriavidus necator (strain JMP 134)).